Here is a 109-residue protein sequence, read N- to C-terminus: Nucleoid-associated protein NT01EI_1109 (109 aa).

The segment at 89 to 109 (KERMASVSSGMQLPPGFKMPF) is disordered.

This sequence belongs to the YbaB/EbfC family. As to quaternary structure, homodimer.

It localises to the cytoplasm. The protein localises to the nucleoid. Binds to DNA and alters its conformation. May be involved in regulation of gene expression, nucleoid organization and DNA protection. This Edwardsiella ictaluri (strain 93-146) protein is Nucleoid-associated protein NT01EI_1109.